Reading from the N-terminus, the 53-residue chain is Light-harvesting protein B-808/866 beta chain (53 aa).

Methionine 1 bears the N-formylmethionine mark. Topologically, residues 1 to 25 (MRDDDDLVPPKWRPLFNNQDWLLHD) are cytoplasmic. Residues histidine 24 and histidine 42 each contribute to the a bacteriochlorophyll site. A helical transmembrane segment spans residues 26 to 48 (IVVKSFYGFGVIAAIAHLLVYLW). The Periplasmic segment spans residues 49 to 53 (KPWLP).

Belongs to the antenna complex beta subunit family. As to quaternary structure, the core complex is formed by different alpha and beta chains, binding bacteriochlorophyll molecules, and arranged most probably in tetrameric structures disposed around the reaction center. The non-pigmented gamma chains may constitute additional components.

It is found in the cell membrane. Functionally, antenna complexes are light-harvesting systems, which transfer the excitation energy to the reaction centers. The protein is Light-harvesting protein B-808/866 beta chain (puf2B) of Chloroflexus aurantiacus (strain ATCC 29366 / DSM 635 / J-10-fl).